A 290-amino-acid polypeptide reads, in one-letter code: Glutaredoxin domain-containing cysteine-rich protein 1 (290 aa).

A Glutaredoxin domain is found at 127 to 234; the sequence is LQQPSTDLEF…DILTKIERVQ (108 aa).

The protein belongs to the GRXCR1 family. Expressed at low levels in adult lung, brain and duodenum with moderate levels in testis. Highly expressed in fetal cochlea.

The protein localises to the cell projection. Its subcellular location is the stereocilium. It is found in the microvillus. The protein resides in the kinocilium. May play a role in actin filament architecture in developing stereocilia of sensory cells. In Homo sapiens (Human), this protein is Glutaredoxin domain-containing cysteine-rich protein 1 (GRXCR1).